We begin with the raw amino-acid sequence, 363 residues long: Translocating chain-associated membrane protein 1-like 1 (363 aa).

The Cytoplasmic portion of the chain corresponds to 1-29 (MGLRKKNARNPPVLSHEFMVQNHADMVSC). The chain crosses the membrane as a helical span at residues 30 to 50 (VGMFFVLGLMFEGTSEMSIAF). Over 51 to 80 (LTLQHGVVVPAEGLPSGSRTLYHYGVKDLA) the chain is Lumenal. Residues 81-101 (TVFFYMLVAIIIHATIQEYVL) traverse the membrane as a helical segment. Over 102-120 (DKLSRRLQLTKGKQNKLNE) the chain is Cytoplasmic. A TLC domain is found at 116-324 (NKLNEAGQLS…TVWLQRWLED (209 aa)). The helical transmembrane segment at 121 to 141 (AGQLSVFYIVSGIWGMIILAS) threads the bilayer. Topologically, residues 142-159 (ENCLSDPTLLWKSQPHNM) are lumenal. The chain crosses the membrane as a helical span at residues 160 to 179 (MTFQMKFFYISQLAYWFHSF). Residues 180–191 (PELYFQKVRKQD) are Cytoplasmic-facing. A helical transmembrane segment spans residues 192–214 (IPGQLIYIGLHLFHIGGAYLLYL). The Lumenal portion of the chain corresponds to 215–218 (NHLG). The helical transmembrane segment at 219–241 (LLLLMLHYAVELLSSVCSLLYFG) threads the bilayer. The Cytoplasmic segment spans residues 242 to 250 (DERYQKGLS). The chain crosses the membrane as a helical span at residues 251-271 (LWPIVFISGRLVTLIVSVVTV). Over 272-295 (GLHLAGTNRNGNALSGNVNVLAAK) the chain is Lumenal. The helical transmembrane segment at 296-316 (IAVLSSSCSIQVYITWTLTTV) threads the bilayer. The Cytoplasmic segment spans residues 317–363 (WLQRWLEDANLHVCGRKRRSRARKGTENGVENPNRIDSPPKKKEKAP). Residues 338–363 (ARKGTENGVENPNRIDSPPKKKEKAP) are disordered. Residues 354–363 (SPPKKKEKAP) show a composition bias toward basic and acidic residues.

It belongs to the TRAM family.

It localises to the endoplasmic reticulum membrane. Stimulatory or required for the translocation of secretory proteins across the ER membrane. In Mus musculus (Mouse), this protein is Translocating chain-associated membrane protein 1-like 1 (Tram1l1).